A 156-amino-acid polypeptide reads, in one-letter code: Ribonuclease H (156 aa).

In terms of domain architecture, RNase H type-1 spans 3–144 (ERKLIHIFTD…CDILARSAAE (142 aa)). Residues Asp12, Glu50, Asp72, and Asp136 each contribute to the Mg(2+) site.

The protein belongs to the RNase H family. As to quaternary structure, monomer. It depends on Mg(2+) as a cofactor.

It localises to the cytoplasm. It catalyses the reaction Endonucleolytic cleavage to 5'-phosphomonoester.. Endonuclease that specifically degrades the RNA of RNA-DNA hybrids. The protein is Ribonuclease H of Shewanella putrefaciens (strain CN-32 / ATCC BAA-453).